The following is a 782-amino-acid chain: Ribosome biogenesis protein ERB1 (782 aa).

Disordered stretches follow at residues 1–123 and 339–361; these read MGSK…RIEK and PEEY…EDRE. Residues 35 to 86 show a composition bias toward acidic residues; the sequence is SEDEEDYLPSDDDDDVEDSENEGTGASEDDDDDDDDDDILSDDIPSDVDSEE. Residues 105–123 show a composition bias toward basic and acidic residues; it reads VDPKREEDDGADRNYRIEK. 7 WD repeats span residues 433–472, 476–516, 567–609, 612–650, 653–692, 696–736, and 752–782; these read GHEG…QVWS, NSEE…VTPA, TVRS…TQIP, KLSG…LVKV, PGAK…RPYK, FHGQ…DQLE, and VSKL…RLWM.

The protein belongs to the WD repeat BOP1/ERB1 family. In terms of assembly, component of the NOP7 complex, composed of ERB1, NOP7 and YTM1. The complex is held together by ERB1, which interacts with NOP7 via its N-terminal domain and with YTM1 via a high-affinity interaction between the seven-bladed beta-propeller domains of the 2 proteins. The NOP7 complex associates with the 66S pre-ribosome.

It is found in the nucleus. It localises to the nucleolus. The protein resides in the nucleoplasm. Its function is as follows. Component of the NOP7 complex, which is required for maturation of the 25S and 5.8S ribosomal RNAs and formation of the 60S ribosome. The chain is Ribosome biogenesis protein ERB1 from Chaetomium globosum (strain ATCC 6205 / CBS 148.51 / DSM 1962 / NBRC 6347 / NRRL 1970) (Soil fungus).